Here is a 329-residue protein sequence, read N- to C-terminus: Catabolite control protein A (329 aa).

One can recognise an HTH lacI-type domain in the interval 1–57 (MTVTIYDVAREARVSMATVSRVVNGNQNVKPETRNKVNEVIKRLNYRPNAVARGLAS). The H-T-H motif DNA-binding region spans 5–24 (IYDVAREARVSMATVSRVVN).

Functionally, global transcriptional regulator of carbon catabolite repression (CCR) and carbon catabolite activation (CCA), which ensures optimal energy usage under diverse conditions. The chain is Catabolite control protein A (ccpA) from Staphylococcus epidermidis (strain ATCC 12228 / FDA PCI 1200).